A 689-amino-acid polypeptide reads, in one-letter code: Glycine--tRNA ligase beta subunit (689 aa).

Belongs to the class-II aminoacyl-tRNA synthetase family. Tetramer of two alpha and two beta subunits.

It localises to the cytoplasm. The catalysed reaction is tRNA(Gly) + glycine + ATP = glycyl-tRNA(Gly) + AMP + diphosphate. This Salmonella dublin (strain CT_02021853) protein is Glycine--tRNA ligase beta subunit.